Consider the following 227-residue polypeptide: MAIKDWHEDDRPREKLLKFGAAHLSDAEILAIFLRTGTQSQSAIELARHLIEQFGSLAELLAAPQETVLACHGIGPAKYAQILASLEMGRRYLDSQLKTGQGLGRSQMVKDYISTQLRGEPREVFAVLCLDNALNLINFEILFTGGISSCSVCIKHVLRHALSHAASQLIIAHNHPHTDAKPSTADNLLTYELKKACDLIDLSLIDHVIVGRNETLSYAENSLPPFN.

The region spanning 102 to 224 (GLGRSQMVKD…TLSYAENSLP (123 aa)) is the MPN domain. 3 residues coordinate Zn(2+): H173, H175, and D186. The JAMM motif motif lies at 173-186 (HNHPHTDAKPSTAD).

This sequence belongs to the UPF0758 family.

This chain is UPF0758 protein Pcryo_2119, found in Psychrobacter cryohalolentis (strain ATCC BAA-1226 / DSM 17306 / VKM B-2378 / K5).